The chain runs to 616 residues: Coagulation factor XII (616 aa).

The first 19 residues, 1 to 19 (MRALLLLGILLVSLESALL), serve as a signal peptide directing secretion. One can recognise a Fibronectin type-II domain in the interval 42–90 (VTGEPCHFPFQYYRQLYYKCIQRGQRGPRPWCATTPNFEKDQRWAYCLE). 13 disulfides stabilise this stretch: cysteine 47/cysteine 73, cysteine 61/cysteine 88, cysteine 98/cysteine 110, cysteine 104/cysteine 119, cysteine 121/cysteine 130, cysteine 135/cysteine 163, cysteine 161/cysteine 170, cysteine 178/cysteine 189, cysteine 183/cysteine 198, cysteine 200/cysteine 209, cysteine 217/cysteine 295, cysteine 238/cysteine 277, and cysteine 266/cysteine 290. An EGF-like 1 domain is found at 94–131 (VKDHCNKGNPCQKGGTCVNMPNGPHCICPDHFTGKHCQ). A glycan (O-linked (Fuc) threonine) is linked at threonine 109. Positions 133–173 (EKCFEPQFLQFFQENEIWHRFEPAGVSKCQCKGPKAQCKPV) constitute a Fibronectin type-I domain. An EGF-like 2 domain is found at 174–210 (ASQVCSTNPCLNGGSCLQTEGHRLCRCPTGYAGRLCD). Residues 216-295 (RCYSDRGLSY…SWQYCRLARC (80 aa)) form the Kringle domain. N-linked (GlcNAc...) asparagine glycans are attached at residues asparagine 249, asparagine 271, and asparagine 335. Residues 303 to 342 (PPILTPTQSPSEHQDSPLLSREPQPTTQTPSQNLTSAWCA) are disordered. Residues 325–338 (PQPTTQTPSQNLTS) are compositionally biased toward polar residues. 7 cysteine pairs are disulfide-bonded: cysteine 358-cysteine 485, cysteine 396-cysteine 412, cysteine 404-cysteine 474, cysteine 435-cysteine 438, cysteine 501-cysteine 570, cysteine 533-cysteine 549, and cysteine 560-cysteine 591. A Peptidase S1 domain is found at 372–615 (IVGGLVALPG…YLAWIQEHTT (244 aa)). Histidine 411 (charge relay system) is an active-site residue. N-linked (GlcNAc...) asparagine glycosylation is present at asparagine 432. Catalysis depends on aspartate 460, which acts as the Charge relay system. Residue serine 564 is the Charge relay system of the active site.

The protein belongs to the peptidase S1 family. As to quaternary structure, interacts with HRG; the interaction, which is enhanced in the presence of zinc ions and inhibited by heparin-binding, inhibits factor XII autoactivation and contact-initiated coagulation. In terms of processing, O- and N-glycosylated.

It localises to the secreted. The enzyme catalyses Selective cleavage of Arg-|-Ile bonds in factor VII to form factor VIIa and factor XI to form factor XIa.. Its activity is regulated as follows. Activity is promoted in the presence of negatively charged surfaces. Its function is as follows. Factor XII is a serum glycoprotein that participates in the initiation of blood coagulation, fibrinolysis, and the generation of bradykinin and angiotensin. Prekallikrein is cleaved by factor XII to form kallikrein, which then cleaves factor XII first to alpha-factor XIIa and then trypsin cleaves it to beta-factor XIIa. Alpha-factor XIIa activates factor XI to factor XIa. The protein is Coagulation factor XII (F12) of Sus scrofa (Pig).